The sequence spans 116 residues: Large ribosomal subunit protein bL19 (116 aa).

The protein belongs to the bacterial ribosomal protein bL19 family.

Functionally, this protein is located at the 30S-50S ribosomal subunit interface and may play a role in the structure and function of the aminoacyl-tRNA binding site. The protein is Large ribosomal subunit protein bL19 of Clostridium beijerinckii (strain ATCC 51743 / NCIMB 8052) (Clostridium acetobutylicum).